The sequence spans 71 residues: Beta-defensin 10 (71 aa).

The N-terminal stretch at 1-23 (MKTLCSLLLIGCLLFSYDTPVVG) is a signal peptide. Cystine bridges form between C37-C66, C44-C59, and C49-C67.

This sequence belongs to the beta-defensin family.

It localises to the secreted. Has antibacterial activity. The polypeptide is Beta-defensin 10 (Defb10) (Rattus norvegicus (Rat)).